The chain runs to 400 residues: Formate-dependent phosphoribosylglycinamide formyltransferase (400 aa).

N(1)-(5-phospho-beta-D-ribosyl)glycinamide-binding positions include 22–23 (EL) and Glu82. ATP-binding positions include Arg115, Lys156, 161-166 (SSGKGQ), 196-199 (EGFI), and Glu204. The 190-residue stretch at 120-309 (RLAAETLGLP…EFALHARAIL (190 aa)) folds into the ATP-grasp domain. Glu268 and Glu280 together coordinate Mg(2+). Residues Asp287, Lys361, and 368–369 (RR) each bind N(1)-(5-phospho-beta-D-ribosyl)glycinamide.

The protein belongs to the PurK/PurT family. Homodimer.

It catalyses the reaction N(1)-(5-phospho-beta-D-ribosyl)glycinamide + formate + ATP = N(2)-formyl-N(1)-(5-phospho-beta-D-ribosyl)glycinamide + ADP + phosphate + H(+). It participates in purine metabolism; IMP biosynthesis via de novo pathway; N(2)-formyl-N(1)-(5-phospho-D-ribosyl)glycinamide from N(1)-(5-phospho-D-ribosyl)glycinamide (formate route): step 1/1. Functionally, involved in the de novo purine biosynthesis. Catalyzes the transfer of formate to 5-phospho-ribosyl-glycinamide (GAR), producing 5-phospho-ribosyl-N-formylglycinamide (FGAR). Formate is provided by PurU via hydrolysis of 10-formyl-tetrahydrofolate. The sequence is that of Formate-dependent phosphoribosylglycinamide formyltransferase from Xanthomonas axonopodis pv. citri (strain 306).